Consider the following 288-residue polypeptide: UDP-3-O-acyl-N-acetylglucosamine deacetylase (288 aa).

Residues histidine 79, histidine 236, and aspartate 240 each coordinate Zn(2+). The Proton donor role is filled by histidine 263.

Belongs to the LpxC family. The cofactor is Zn(2+).

The catalysed reaction is a UDP-3-O-[(3R)-3-hydroxyacyl]-N-acetyl-alpha-D-glucosamine + H2O = a UDP-3-O-[(3R)-3-hydroxyacyl]-alpha-D-glucosamine + acetate. It functions in the pathway glycolipid biosynthesis; lipid IV(A) biosynthesis; lipid IV(A) from (3R)-3-hydroxytetradecanoyl-[acyl-carrier-protein] and UDP-N-acetyl-alpha-D-glucosamine: step 2/6. Its function is as follows. Catalyzes the hydrolysis of UDP-3-O-myristoyl-N-acetylglucosamine to form UDP-3-O-myristoylglucosamine and acetate, the committed step in lipid A biosynthesis. The polypeptide is UDP-3-O-acyl-N-acetylglucosamine deacetylase (Rickettsia africae (strain ESF-5)).